The sequence spans 683 residues: Solute carrier organic anion transporter family member 2B1 (683 aa).

Positions M1–D30 are disordered. The Cytoplasmic segment spans residues M1–K41. The segment covering E13 to D30 has biased composition (basic and acidic residues). At S21 the chain carries Phosphoserine. A helical transmembrane segment spans residues F42–L61. Residues K62–G80 are Extracellular-facing. Residues L81–G101 traverse the membrane as a helical segment. Topologically, residues S102–P107 are cytoplasmic. Residues R108–E132 form a helical membrane-spanning segment. Residues P133–H177 lie on the Extracellular side of the membrane. Residues N143 and N166 are each glycosylated (N-linked (GlcNAc...) asparagine). The chain crosses the membrane as a helical span at residues L178 to D207. The Cytoplasmic segment spans residues D208–T226. A helical transmembrane segment spans residues T227–I247. The Extracellular segment spans residues D248–V265. Residues G266–P290 traverse the membrane as a helical segment. Topologically, residues R291–R355 are cytoplasmic. 2 positions are modified to phosphoserine: S312 and S315. Residues N356–A377 traverse the membrane as a helical segment. The Extracellular portion of the chain corresponds to G378–F397. A helical membrane pass occupies residues A398–V421. Residues K422–H425 lie on the Cytoplasmic side of the membrane. Residues L426 to L449 traverse the membrane as a helical segment. Topologically, residues F450 to F553 are extracellular. Residues P472–A532 enclose the Kazal-like domain. Cystine bridges form between C478-C509, C484-C505, and C493-C530. 2 N-linked (GlcNAc...) asparagine glycosylation sites follow: N527 and N534. The chain crosses the membrane as a helical span at residues I554–L576. At R577 to T585 the chain is on the cytoplasmic side. The helical transmembrane segment at L586 to I611 threads the bilayer. The Extracellular segment spans residues D612–Q644. A helical transmembrane segment spans residues F645–L662. Residues R663–L683 are Cytoplasmic-facing.

It belongs to the organo anion transporter (TC 2.A.60) family. Expressed in liver, kidney, small intestine mucosa, large intestine, brain, lung, spleen, stomach and heart.

Its subcellular location is the cell membrane. It localises to the basal cell membrane. It is found in the apical cell membrane. The enzyme catalyses dehydroepiandrosterone 3-sulfate(out) = dehydroepiandrosterone 3-sulfate(in). The catalysed reaction is estrone 3-sulfate(out) = estrone 3-sulfate(in). It catalyses the reaction estrone 3-sulfate(out) + hydrogencarbonate(in) = estrone 3-sulfate(in) + hydrogencarbonate(out). It carries out the reaction taurocholate(out) = taurocholate(in). The enzyme catalyses coproporphyrin III(out) = coproporphyrin III(in). The catalysed reaction is substance P(out) = substance P(in). It catalyses the reaction pregnenolone sulfate(out) = pregnenolone sulfate(in). It carries out the reaction prostaglandin E2(out) = prostaglandin E2(in). The enzyme catalyses prostaglandin D2(out) = prostaglandin D2(in). The catalysed reaction is L-thyroxine(out) = L-thyroxine(in). Functionally, mediates the Na(+)-independent transport of steroid sulfate conjugates such as estrone 3-sulfate (E1S), dehydroepiandrosterone sulfate (DHEA-S) and pregnenolone sulfate (PregS) and other specific organic anions. Responsible for the transport of E1S through the basal membrane of syncytiotrophoblast, highlighting a potential role in the placental absorption of fetal-derived sulfated steroids including DHEA-S. Also facilitates the uptake of sulfated steroids at the basal/sinusoidal membrane of hepatocytes, therefore accounting for the major part of organic anions clearance of liver. Mediates the intestinal uptake of sulfated steroids. Mediates the uptake of the neurosteroids DHEA-S and PregS into the endothelial cells of the blood-brain barrier as the first step to enter the brain. Also plays a role in the reuptake of neuropeptides such as substance P/TAC1 and vasoactive intestinal peptide/VIP released from retinal neurons. May act as a heme transporter that promotes cellular iron availability. Also transports heme by-product coproporphyrin III (CPIII), and may be involved in their hepatic disposition. Mediates the uptake of other substrates such as prostaglandins D2 (PGD2), E1 (PGE1) and E2 (PGE2), taurocholate, L-thyroxine, leukotriene C4 and thromboxane B2. May contribute to regulate the transport of organic compounds in testis across the blood-testis-barrier. Shows a pH-sensitive substrate specificity which may be ascribed to the protonation state of the binding site and leads to a stimulation of substrate transport in an acidic microenvironment. The exact transport mechanism has not been yet deciphered but most likely involves an anion exchange, coupling the cellular uptake of organic substrate with the efflux of an anionic compound. Hydrogencarbonate/HCO3(-) acts as a probable counteranion that exchanges for organic anions. Cytoplasmic glutamate may also act as counteranion in the placenta. An inwardly directed proton gradient has also been proposed as the driving force of E1S uptake with a (H(+):E1S) stoichiometry of (1:1). This chain is Solute carrier organic anion transporter family member 2B1, found in Mus musculus (Mouse).